A 123-amino-acid chain; its full sequence is Cysteine proteinase inhibitor 8 (123 aa).

The N-terminal stretch at Met1–Ala19 is a signal peptide. One can recognise a Cystatin domain in the interval Gly33–Asp91. Positions Gln76 to Gly80 match the Secondary area of contact motif.

It belongs to the cystatin family. Phytocystatin subfamily.

The protein localises to the secreted. Functionally, specific inhibitor of cysteine proteinases. Probably involved in the regulation of endogenous processes and in defense against pests and pathogens. This chain is Cysteine proteinase inhibitor 8, found in Oryza sativa subsp. japonica (Rice).